We begin with the raw amino-acid sequence, 128 residues long: Aspartate 1-decarboxylase (128 aa).

Ser-25 serves as the catalytic Schiff-base intermediate with substrate; via pyruvic acid. Ser-25 carries the pyruvic acid (Ser) modification. Thr-57 is a binding site for substrate. The active-site Proton donor is the Tyr-58. 73–75 (GSA) serves as a coordination point for substrate.

It belongs to the PanD family. In terms of assembly, heterooctamer of four alpha and four beta subunits. Pyruvate serves as cofactor. In terms of processing, is synthesized initially as an inactive proenzyme, which is activated by self-cleavage at a specific serine bond to produce a beta-subunit with a hydroxyl group at its C-terminus and an alpha-subunit with a pyruvoyl group at its N-terminus.

The protein resides in the cytoplasm. The enzyme catalyses L-aspartate + H(+) = beta-alanine + CO2. It functions in the pathway cofactor biosynthesis; (R)-pantothenate biosynthesis; beta-alanine from L-aspartate: step 1/1. Catalyzes the pyruvoyl-dependent decarboxylation of aspartate to produce beta-alanine. This Paraburkholderia phymatum (strain DSM 17167 / CIP 108236 / LMG 21445 / STM815) (Burkholderia phymatum) protein is Aspartate 1-decarboxylase.